Reading from the N-terminus, the 227-residue chain is 2-C-methyl-D-erythritol 4-phosphate cytidylyltransferase (227 aa).

Belongs to the IspD/TarI cytidylyltransferase family. IspD subfamily.

It carries out the reaction 2-C-methyl-D-erythritol 4-phosphate + CTP + H(+) = 4-CDP-2-C-methyl-D-erythritol + diphosphate. Its pathway is isoprenoid biosynthesis; isopentenyl diphosphate biosynthesis via DXP pathway; isopentenyl diphosphate from 1-deoxy-D-xylulose 5-phosphate: step 2/6. In terms of biological role, catalyzes the formation of 4-diphosphocytidyl-2-C-methyl-D-erythritol from CTP and 2-C-methyl-D-erythritol 4-phosphate (MEP). This is 2-C-methyl-D-erythritol 4-phosphate cytidylyltransferase from Dehalococcoides mccartyi (strain ATCC BAA-2266 / KCTC 15142 / 195) (Dehalococcoides ethenogenes (strain 195)).